Reading from the N-terminus, the 376-residue chain is Lipoprotein p33 (376 aa).

An N-terminal signal peptide occupies residues Met-1–Ser-30. A lipid anchor (N-palmitoyl cysteine) is attached at Cys-31. A lipid anchor (S-diacylglycerol cysteine) is attached at Cys-31. The disordered stretch occupies residues Asp-35–Thr-59. Residues Gly-38–Gly-51 are compositionally biased toward gly residues.

Belongs to the p35 lipoprotein family.

It is found in the cell membrane. The protein is Lipoprotein p33 of Malacoplasma penetrans (Mycoplasma penetrans).